A 401-amino-acid chain; its full sequence is Carbamoyl phosphate synthase small chain (401 aa).

A CPSase region spans residues 1–203 (MTATPAWTIQ…EGYSTLGETD (203 aa)). Residues serine 56, glycine 255, and glycine 257 each contribute to the L-glutamine site. Positions 207–395 (HVVALDYGVK…LNLIREKKGE (189 aa)) constitute a Glutamine amidotransferase type-1 domain. The active-site Nucleophile is cysteine 284. L-glutamine is bound by residues leucine 285, glutamine 288, asparagine 326, glycine 328, and phenylalanine 329. Residues histidine 368 and glutamate 370 contribute to the active site.

It belongs to the CarA family. Composed of two chains; the small (or glutamine) chain promotes the hydrolysis of glutamine to ammonia, which is used by the large (or ammonia) chain to synthesize carbamoyl phosphate. Tetramer of heterodimers (alpha,beta)4.

It catalyses the reaction hydrogencarbonate + L-glutamine + 2 ATP + H2O = carbamoyl phosphate + L-glutamate + 2 ADP + phosphate + 2 H(+). The enzyme catalyses L-glutamine + H2O = L-glutamate + NH4(+). The protein operates within amino-acid biosynthesis; L-arginine biosynthesis; carbamoyl phosphate from bicarbonate: step 1/1. It functions in the pathway pyrimidine metabolism; UMP biosynthesis via de novo pathway; (S)-dihydroorotate from bicarbonate: step 1/3. Functionally, small subunit of the glutamine-dependent carbamoyl phosphate synthetase (CPSase). CPSase catalyzes the formation of carbamoyl phosphate from the ammonia moiety of glutamine, carbonate, and phosphate donated by ATP, constituting the first step of 2 biosynthetic pathways, one leading to arginine and/or urea and the other to pyrimidine nucleotides. The small subunit (glutamine amidotransferase) binds and cleaves glutamine to supply the large subunit with the substrate ammonia. The chain is Carbamoyl phosphate synthase small chain from Rhizobium meliloti (strain 1021) (Ensifer meliloti).